Reading from the N-terminus, the 170-residue chain is J domain-containing protein (170 aa).

Residues 17-82 (DYYALLGCDE…SKRALYDKWR (66 aa)) form the J domain. The interval 101 to 170 (QQSMHWSKPN…VISKFRNYEI (70 aa)) is disordered. A compositionally biased stretch (basic and acidic residues) spans 110–120 (NTKDRMLEGEP). 2 stretches are compositionally biased toward low complexity: residues 121–135 (GKPS…SNPG) and 142–153 (GGAALWGRWGAG).

The chain is J domain-containing protein (jdp) from Manduca sexta (Tobacco hawkmoth).